The following is a 159-amino-acid chain: Eukaryotic translation initiation factor 5A-3 (159 aa).

A compositionally biased stretch (basic and acidic residues) spans 1–12; the sequence is MSDEEHQFESKA. The interval 1–21 is disordered; it reads MSDEEHQFESKADAGASKTYP. K52 carries the post-translational modification Hypusine.

The protein belongs to the eIF-5A family. In terms of processing, lys-52 undergoes hypusination, a unique post-translational modification that consists in the addition of a butylamino group from spermidine to lysine side chain, leading to the formation of the unusual amino acid hypusine. eIF-5As are the only known proteins to undergo this modification, which is essential for their function.

Its function is as follows. Translation factor that promotes translation elongation and termination, particularly upon ribosome stalling at specific amino acid sequence contexts. Binds between the exit (E) and peptidyl (P) site of the ribosome and promotes rescue of stalled ribosome: specifically required for efficient translation of polyproline-containing peptides as well as other motifs that stall the ribosome. Acts as a ribosome quality control (RQC) cofactor by joining the RQC complex to facilitate peptidyl transfer during CAT tailing step. The sequence is that of Eukaryotic translation initiation factor 5A-3 from Solanum lycopersicum (Tomato).